The primary structure comprises 1198 residues: DNA polymerase II large subunit (1198 aa).

Disordered regions lie at residues 281 to 332 (YKTG…PQKK) and 534 to 553 (HWAETDGAQQTRPPDGAAES). The span at 286-319 (DTDEADADSDDGTDEDAADDSDIDDSSAGDEEAD) shows a compositional bias: acidic residues.

Belongs to the archaeal DNA polymerase II family. In terms of assembly, heterodimer of a large subunit and a small subunit.

The enzyme catalyses DNA(n) + a 2'-deoxyribonucleoside 5'-triphosphate = DNA(n+1) + diphosphate. The catalysed reaction is Exonucleolytic cleavage in the 3'- to 5'-direction to yield nucleoside 5'-phosphates.. Functionally, possesses two activities: a DNA synthesis (polymerase) and an exonucleolytic activity that degrades single-stranded DNA in the 3'- to 5'-direction. Has a template-primer preference which is characteristic of a replicative DNA polymerase. The chain is DNA polymerase II large subunit from Natronomonas pharaonis (strain ATCC 35678 / DSM 2160 / CIP 103997 / JCM 8858 / NBRC 14720 / NCIMB 2260 / Gabara) (Halobacterium pharaonis).